Consider the following 319-residue polypeptide: 33 kDa chaperonin (319 aa).

Positions 1-10 are enriched in basic and acidic residues; the sequence is MTDASGSERL. The tract at residues 1–25 is disordered; that stretch reads MTDASGSERLKRAKGISEGTPSSLP. Intrachain disulfides connect cysteine 261–cysteine 263 and cysteine 294–cysteine 297.

Belongs to the HSP33 family. Post-translationally, under oxidizing conditions two disulfide bonds are formed involving the reactive cysteines. Under reducing conditions zinc is bound to the reactive cysteines and the protein is inactive.

It localises to the cytoplasm. Its function is as follows. Redox regulated molecular chaperone. Protects both thermally unfolding and oxidatively damaged proteins from irreversible aggregation. Plays an important role in the bacterial defense system toward oxidative stress. The protein is 33 kDa chaperonin of Synechococcus sp. (strain JA-2-3B'a(2-13)) (Cyanobacteria bacterium Yellowstone B-Prime).